The chain runs to 205 residues: Glycerol-3-phosphate acyltransferase (205 aa).

Transmembrane regions (helical) follow at residues 5 to 25 (LALG…GYLA), 54 to 74 (GPAA…VWLA), 87 to 107 (IVLG…WLAF), 117 to 137 (VGLL…VWGV), 138 to 158 (CFAV…ATPL), and 162 to 182 (LWRA…YIVW).

This sequence belongs to the PlsY family. In terms of assembly, probably interacts with PlsX.

The protein localises to the cell inner membrane. The enzyme catalyses an acyl phosphate + sn-glycerol 3-phosphate = a 1-acyl-sn-glycero-3-phosphate + phosphate. Its pathway is lipid metabolism; phospholipid metabolism. Functionally, catalyzes the transfer of an acyl group from acyl-phosphate (acyl-PO(4)) to glycerol-3-phosphate (G3P) to form lysophosphatidic acid (LPA). This enzyme utilizes acyl-phosphate as fatty acyl donor, but not acyl-CoA or acyl-ACP. This is Glycerol-3-phosphate acyltransferase from Gloeobacter violaceus (strain ATCC 29082 / PCC 7421).